Here is a 1104-residue protein sequence, read N- to C-terminus: Transposon Ty4-P Gag-Pol polyprotein (1104 aa).

The stretch at 48–112 (VKQYQRNLNR…VEKIQLLETN (65 aa)) forms a coiled coil. The tract at residues 381-501 (QQQLKSSAKE…KTKMVLSRKY (121 aa)) is ty4 protease. The active-site For protease activity; shared with dimeric partner is the Asp-414. The integrase-type zinc finger-like stretch occupies residues 539–599 (AIKPTSSPGF…EPNEFWCQTC (61 aa)). The Integrase catalytic domain maps to 619-786 (TDHEPGSSWC…LPLKAISRQP (168 aa)). Mg(2+) contacts are provided by Asp-630 and Asp-695.

As to quaternary structure, the protease is a homodimer, whose active site consists of two apposed aspartic acid residues. Post-translationally, proteolytically processed into capsid protein (CA), Ty4 protease (PR), integrase (IN) and reverse transcriptase/ribonuclease H (RT) proteins. Initially, virus-like particles (VLPs) are composed of the structural unprocessed proteins Gag and Gag-Pol, and also contain the host initiator methionine tRNA (tRNA(i)-Met) which serves as a primer for minus-strand DNA synthesis, and a dimer of genomic Ty RNA. Processing of the polyproteins occurs within the particle and proceeds by an ordered pathway, called maturation. First, the protease (PR) is released by autocatalytic cleavage of the Gag-Pol polyprotein, and this cleavage is a prerequisite for subsequent processing at the remaining sites to release the mature structural and catalytic proteins. Maturation takes place prior to the RT reaction and is required to produce transposition-competent VLPs.

It localises to the cytoplasm. It is found in the nucleus. It carries out the reaction DNA(n) + a 2'-deoxyribonucleoside 5'-triphosphate = DNA(n+1) + diphosphate. It catalyses the reaction Endonucleolytic cleavage to 5'-phosphomonoester.. Its function is as follows. Capsid protein (CA) is the structural component of the virus-like particle (VLP), forming the shell that encapsulates the retrotransposons dimeric RNA genome. The aspartyl protease (PR) mediates the proteolytic cleavages of the Gag and Gag-Pol polyproteins after assembly of the VLP. Functionally, reverse transcriptase/ribonuclease H (RT) is a multifunctional enzyme that catalyzes the conversion of the retro-elements RNA genome into dsDNA within the VLP. The enzyme displays a DNA polymerase activity that can copy either DNA or RNA templates, and a ribonuclease H (RNase H) activity that cleaves the RNA strand of RNA-DNA heteroduplexes during plus-strand synthesis and hydrolyzes RNA primers. The conversion leads to a linear dsDNA copy of the retrotransposon that includes long terminal repeats (LTRs) at both ends. In terms of biological role, integrase (IN) targets the VLP to the nucleus, where a subparticle preintegration complex (PIC) containing at least integrase and the newly synthesized dsDNA copy of the retrotransposon must transit the nuclear membrane. Once in the nucleus, integrase performs the integration of the dsDNA into the host genome. The polypeptide is Transposon Ty4-P Gag-Pol polyprotein (TY4B-P) (Saccharomyces cerevisiae (strain ATCC 204508 / S288c) (Baker's yeast)).